The sequence spans 338 residues: Starch-binding domain-containing protein 1 (338 aa).

The Extracellular segment spans residues 1-6 (MGAVWS). Residues 7–23 (ALLVGGGLAGALILWLL) form a helical membrane-spanning segment. Residues 24–338 (RGDSGAPGKD…KVVHGWWGIH (315 aa)) are Cytoplasmic-facing. Disordered stretches follow at residues 30–73 (PGKD…RELV) and 120–148 (KIPD…WRLP). The segment covering 36–52 (AEPPQKGAPPGEAAAPG) has biased composition (low complexity). The segment covering 53 to 62 (DGPGGGGSGG) has biased composition (gly residues). At S68 the chain carries Phosphoserine. Basic and acidic residues predominate over residues 122-132 (PDTHSRADSEA). S140, S167, and S179 each carry phosphoserine. Positions 185–191 (HEDWEVV) match the LIR motif. 7 positions are modified to phosphoserine: S195, S196, S205, S209, S212, S220, and S223. A CBM20 domain is found at 238-337 (SLKPQQVSIQ…DKVVHGWWGI (100 aa)).

As to quaternary structure, interacts with the ATG8 family proteins GABARAP and GABARAPL1. Interacts with several glycogen-associated proteins, such as GYS2 (liver glycogen synthase), GDE (glycogen debranching enzyme), GBE1 (glycogen branching enzyme 1) and EPM2A (Laforin). Ubiquitinated, which leads to proteasomal degradation. In terms of tissue distribution, expressed at high level in glycogen-accumulating organs such as muscle and liver. Trace signals are also found in brain, kidney, and pancreas.

Its subcellular location is the preautophagosomal structure membrane. It is found in the endoplasmic reticulum membrane. The protein localises to the cell membrane. The protein resides in the sarcolemma. It localises to the T-tubule. In terms of biological role, acts as a cargo receptor for glycogen. Delivers its cargo to an autophagic pathway called glycophagy, resulting in the transport of glycogen to lysosomes. This is Starch-binding domain-containing protein 1 from Mus musculus (Mouse).